We begin with the raw amino-acid sequence, 376 residues long: Queuine tRNA-ribosyltransferase (376 aa).

The Proton acceptor role is filled by D89. Substrate is bound by residues 89–93 (DSGGF), D143, Q194, and G221. Residues 252–258 (GVGIPSN) are RNA binding. The active-site Nucleophile is D271. The interval 276 to 280 (ARNGR) is RNA binding; important for wobble base 34 recognition. Zn(2+) is bound by residues C309, C311, C314, and H340.

The protein belongs to the queuine tRNA-ribosyltransferase family. As to quaternary structure, homodimer. Within each dimer, one monomer is responsible for RNA recognition and catalysis, while the other monomer binds to the replacement base PreQ1. It depends on Zn(2+) as a cofactor.

The catalysed reaction is 7-aminomethyl-7-carbaguanine + guanosine(34) in tRNA = 7-aminomethyl-7-carbaguanosine(34) in tRNA + guanine. It functions in the pathway tRNA modification; tRNA-queuosine biosynthesis. Functionally, catalyzes the base-exchange of a guanine (G) residue with the queuine precursor 7-aminomethyl-7-deazaguanine (PreQ1) at position 34 (anticodon wobble position) in tRNAs with GU(N) anticodons (tRNA-Asp, -Asn, -His and -Tyr). Catalysis occurs through a double-displacement mechanism. The nucleophile active site attacks the C1' of nucleotide 34 to detach the guanine base from the RNA, forming a covalent enzyme-RNA intermediate. The proton acceptor active site deprotonates the incoming PreQ1, allowing a nucleophilic attack on the C1' of the ribose to form the product. After dissociation, two additional enzymatic reactions on the tRNA convert PreQ1 to queuine (Q), resulting in the hypermodified nucleoside queuosine (7-(((4,5-cis-dihydroxy-2-cyclopenten-1-yl)amino)methyl)-7-deazaguanosine). The protein is Queuine tRNA-ribosyltransferase of Clostridium botulinum (strain Hall / ATCC 3502 / NCTC 13319 / Type A).